The following is a 191-amino-acid chain: Ribonuclease HII (191 aa).

Residues 4-191 (YTAAGLDEVG…HRKTFLSKIQ (188 aa)) enclose the RNase H type-2 domain. A divalent metal cation contacts are provided by aspartate 10, glutamate 11, and aspartate 106.

The protein belongs to the RNase HII family. Mn(2+) serves as cofactor. Requires Mg(2+) as cofactor.

It is found in the cytoplasm. It catalyses the reaction Endonucleolytic cleavage to 5'-phosphomonoester.. Endonuclease that specifically degrades the RNA of RNA-DNA hybrids. In Prochlorococcus marinus (strain SARG / CCMP1375 / SS120), this protein is Ribonuclease HII.